A 464-amino-acid polypeptide reads, in one-letter code: Cysteine--tRNA ligase (464 aa).

Cys-27 serves as a coordination point for Zn(2+). The 'HIGH' region motif lies at 29–39; sequence PTVYNYFHIGN. Residues Cys-207, His-232, and Glu-236 each contribute to the Zn(2+) site. The 'KMSKS' region signature appears at 264-268; the sequence is KMSKS. Lys-267 contributes to the ATP binding site.

Belongs to the class-I aminoacyl-tRNA synthetase family. In terms of assembly, monomer. Zn(2+) is required as a cofactor.

It localises to the cytoplasm. It carries out the reaction tRNA(Cys) + L-cysteine + ATP = L-cysteinyl-tRNA(Cys) + AMP + diphosphate. The polypeptide is Cysteine--tRNA ligase (Alkaliphilus oremlandii (strain OhILAs) (Clostridium oremlandii (strain OhILAs))).